Reading from the N-terminus, the 924-residue chain is DNA repair and recombination protein RDH54 (924 aa).

Residues 1–10 (MQIPKYENKP) are compositionally biased toward basic and acidic residues. 2 disordered regions span residues 1 to 21 (MQIP…GSNK) and 155 to 183 (EALS…NDGG). The segment covering 168–178 (TTSTTETVPST) has biased composition (low complexity). The Helicase ATP-binding domain occupies 299–487 (LENDSDISGC…FTIIDFINPG (189 aa)). Position 346–353 (346–353 (IPLTGLCK)) interacts with ATP. The DEGH box motif lies at 472–475 (NDLN). A Glycyl lysine isopeptide (Lys-Gly) (interchain with G-Cter in ubiquitin) cross-link involves residue lysine 615. In terms of domain architecture, Helicase C-terminal spans 631–790 (KLRVLMTLLE…DSEMRNKESS (160 aa)).

Belongs to the SNF2/RAD54 helicase family. As to quaternary structure, interacts with RAD51 and DMC1.

The protein resides in the nucleus. It carries out the reaction ATP + H2O = ADP + phosphate + H(+). In terms of biological role, involved in the recombinational repair of double-strand breaks (DSB) in DNA during mitosis and meiosis. Has DNA dependent ATPase activity. Promotes D-loop (displacement loop) formation with RAD51 recombinase. Modifies the topology of double-stranded DNA during the D-loop reaction to facilitate the invasion of the homologous duplex molecule by the initiating single-stranded DNA substrate. Required for adaptation from G2/M checkpoint arrest induced by a double strand break, by participating in monitoring the extent of single-stranded DNA produced by resection of DNA ends. This role is distinct from its roles in recombination. Promotes colocalization of RAD51 and DMC1 during meiotic recombination. Involved in crossover interference. The protein is DNA repair and recombination protein RDH54 (RDH54) of Saccharomyces cerevisiae (strain YJM789) (Baker's yeast).